The chain runs to 143 residues: Nucleoside diphosphate kinase (143 aa).

ATP contacts are provided by Lys11, Phe59, Arg87, Thr93, Arg104, and Asn114. The active-site Pros-phosphohistidine intermediate is His117.

This sequence belongs to the NDK family. In terms of assembly, homotetramer. Requires Mg(2+) as cofactor.

Its subcellular location is the cytoplasm. The enzyme catalyses a 2'-deoxyribonucleoside 5'-diphosphate + ATP = a 2'-deoxyribonucleoside 5'-triphosphate + ADP. It catalyses the reaction a ribonucleoside 5'-diphosphate + ATP = a ribonucleoside 5'-triphosphate + ADP. In terms of biological role, major role in the synthesis of nucleoside triphosphates other than ATP. The ATP gamma phosphate is transferred to the NDP beta phosphate via a ping-pong mechanism, using a phosphorylated active-site intermediate. This chain is Nucleoside diphosphate kinase, found in Shewanella loihica (strain ATCC BAA-1088 / PV-4).